Consider the following 399-residue polypeptide: Zinc metalloproteinase nas-25 (399 aa).

The signal sequence occupies residues 1-20 (MQIYLGITICLVAFLTVIDC). A Peptidase M12A domain is found at 41 to 237 (QVQRDLTYRW…DQINQYYQCY (197 aa)). Asn52 and Asn61 each carry an N-linked (GlcNAc...) asparagine glycan. Cystine bridges form between Cys82-Cys236, Cys106-Cys126, Cys240-Cys260, and Cys265-Cys274. A Zn(2+)-binding site is contributed by His134. The active site involves Glu135. Zn(2+) is bound by residues His138 and His144. The EGF-like domain maps to 232-275 (QYYQCYDSCRNAGQLANCANGGIPNPNNCQVCNCPMGYGGDLCD). A glycan (N-linked (GlcNAc...) asparagine) is linked at Asn371.

Zn(2+) serves as cofactor. Expressed in pharyngeal muscles, pharyngeal-intestinal valve, rectal gland cells and arcade cells.

The protein resides in the secreted. Its function is as follows. Metalloprotease. The polypeptide is Zinc metalloproteinase nas-25 (nas-25) (Caenorhabditis elegans).